The following is a 596-amino-acid chain: MKSKTFLEKNFINVQAYKYNGDLYRQWNGSKIIKNDSQNIILYNFHSRIMEKSGKSWQVSEPSLWIFPKNENYNVNVLLRPEGNYYYINLTSPFIFEDNTIKYIDFDIDIKVYPKKEIEIVDIKEFQKNIKDYGYPPSVRKMVYKQVQNLLMFYEKQTSFFHRDFIDNIVNSLAKNKMLVFQSKKLSNFSQRYFEELRKNTKNEKIFKVYLCGPTVYDEVHIGNMRSVVVVDLIVRAQKYLGKKTLFVHNITDIDDKIIERSIQSKISENKISEKYFREYKKVLKKYRIKSIDKMPKVTDNIDSIVKFINSLDKKGYVIQKDDGFVFDVSKIKNYGKRLSREDKKQVENFYLWKSTTKGVQYNYNGFLGRPGWHSECTLFIDDIFNSQTLDIHAGGIDLTFPHHENENAQYIAKNDVKITKHWLHVGQVMFKNQKMSKSLGNVILAKDFDEDIFKIILINSSVTAPIYITNELIENAKVIINKYKKLYFKFLNLSLSFNFDDNVRYMVRKIADKDFSSFNLKLNEYIKAYNTSLEADKLTIVSSVIHFLNFSFIEQIEKDFRKNKKIYDIWQGFLKQKNYEKADMFRKILIDQGLI.

Residues 1–199 (MKSKTFLEKN…SQRYFEELRK (199 aa)) are unknown. Residue C212 coordinates Zn(2+). Residues 214–224 (PTVYDEVHIGN) carry the 'HIGH' region motif. 3 residues coordinate Zn(2+): C377, H403, and E407. The 'KMSKS' region signature appears at 435-439 (KMSKS). Residue K438 coordinates ATP.

It belongs to the class-I aminoacyl-tRNA synthetase family. As to quaternary structure, monomer. Requires Zn(2+) as cofactor.

It is found in the cytoplasm. It catalyses the reaction tRNA(Cys) + L-cysteine + ATP = L-cysteinyl-tRNA(Cys) + AMP + diphosphate. This is Cysteine--tRNA ligase (cysS) from Mycoplasmopsis pulmonis (strain UAB CTIP) (Mycoplasma pulmonis).